The following is a 670-amino-acid chain: DNA ligase (670 aa).

NAD(+) is bound by residues 32-36 (DAEYD), 81-82 (SL), and glutamate 113. Lysine 115 (N6-AMP-lysine intermediate) is an active-site residue. Positions 136, 173, 290, and 314 each coordinate NAD(+). Zn(2+)-binding residues include cysteine 408, cysteine 411, cysteine 426, and cysteine 432. Residues 592–670 (ESDSPFAGKT…EAEMIRLLGE (79 aa)) enclose the BRCT domain.

This sequence belongs to the NAD-dependent DNA ligase family. LigA subfamily. Requires Mg(2+) as cofactor. The cofactor is Mn(2+).

The catalysed reaction is NAD(+) + (deoxyribonucleotide)n-3'-hydroxyl + 5'-phospho-(deoxyribonucleotide)m = (deoxyribonucleotide)n+m + AMP + beta-nicotinamide D-nucleotide.. Its function is as follows. DNA ligase that catalyzes the formation of phosphodiester linkages between 5'-phosphoryl and 3'-hydroxyl groups in double-stranded DNA using NAD as a coenzyme and as the energy source for the reaction. It is essential for DNA replication and repair of damaged DNA. In Yersinia pestis bv. Antiqua (strain Antiqua), this protein is DNA ligase.